Consider the following 284-residue polypeptide: Bifunctional protein FolD (284 aa).

Residues glycine 165–serine 167, serine 190, and isoleucine 231 each bind NADP(+).

The protein belongs to the tetrahydrofolate dehydrogenase/cyclohydrolase family. In terms of assembly, homodimer.

The catalysed reaction is (6R)-5,10-methylene-5,6,7,8-tetrahydrofolate + NADP(+) = (6R)-5,10-methenyltetrahydrofolate + NADPH. It carries out the reaction (6R)-5,10-methenyltetrahydrofolate + H2O = (6R)-10-formyltetrahydrofolate + H(+). It functions in the pathway one-carbon metabolism; tetrahydrofolate interconversion. Its function is as follows. Catalyzes the oxidation of 5,10-methylenetetrahydrofolate to 5,10-methenyltetrahydrofolate and then the hydrolysis of 5,10-methenyltetrahydrofolate to 10-formyltetrahydrofolate. The chain is Bifunctional protein FolD from Dechloromonas aromatica (strain RCB).